Here is a 155-residue protein sequence, read N- to C-terminus: Ferredoxin-6, chloroplastic (155 aa).

The transit peptide at 1–58 (MSTATAPRLPAPRSGASYHYQTTAAPAANTLSFAGHARQAARASGPRLSSRFVASAAA) directs the protein to the chloroplast. The 92-residue stretch at 61–152 (HKVKLVGPDG…DCVIHTHKEE (92 aa)) folds into the 2Fe-2S ferredoxin-type domain. Residues C98, C103, C106, and C136 each contribute to the [2Fe-2S] cluster site.

This sequence belongs to the 2Fe2S plant-type ferredoxin family. [2Fe-2S] cluster serves as cofactor.

The protein resides in the plastid. It is found in the chloroplast. Ferredoxins are iron-sulfur proteins that transfer electrons in a wide variety of metabolic reactions. The sequence is that of Ferredoxin-6, chloroplastic (FDX6) from Zea mays (Maize).